The primary structure comprises 348 residues: Phosphate acyltransferase (348 aa).

This sequence belongs to the PlsX family. As to quaternary structure, homodimer. Probably interacts with PlsY.

The protein resides in the cytoplasm. It catalyses the reaction a fatty acyl-[ACP] + phosphate = an acyl phosphate + holo-[ACP]. It participates in lipid metabolism; phospholipid metabolism. In terms of biological role, catalyzes the reversible formation of acyl-phosphate (acyl-PO(4)) from acyl-[acyl-carrier-protein] (acyl-ACP). This enzyme utilizes acyl-ACP as fatty acyl donor, but not acyl-CoA. The polypeptide is Phosphate acyltransferase (Francisella tularensis subsp. novicida (strain U112)).